The sequence spans 61 residues: Small ribosomal subunit protein uS14 (61 aa).

Positions 24, 27, 40, and 43 each coordinate Zn(2+).

Belongs to the universal ribosomal protein uS14 family. Zinc-binding uS14 subfamily. Part of the 30S ribosomal subunit. Contacts proteins S3 and S10. Zn(2+) serves as cofactor.

Its function is as follows. Binds 16S rRNA, required for the assembly of 30S particles and may also be responsible for determining the conformation of the 16S rRNA at the A site. This Bacillus anthracis (strain A0248) protein is Small ribosomal subunit protein uS14.